A 95-amino-acid chain; its full sequence is uncharacterized protein (95 aa).

This is an uncharacterized protein from Enterobacteria phage T4 (Bacteriophage T4).